The chain runs to 177 residues: Large ribosomal subunit protein uL5 (177 aa).

The protein belongs to the universal ribosomal protein uL5 family. In terms of assembly, part of the 50S ribosomal subunit; part of the 5S rRNA/L5/L18/L25 subcomplex. Contacts the 5S rRNA and the P site tRNA. Forms a bridge to the 30S subunit in the 70S ribosome.

In terms of biological role, this is one of the proteins that bind and probably mediate the attachment of the 5S RNA into the large ribosomal subunit, where it forms part of the central protuberance. In the 70S ribosome it contacts protein S13 of the 30S subunit (bridge B1b), connecting the 2 subunits; this bridge is implicated in subunit movement. Contacts the P site tRNA; the 5S rRNA and some of its associated proteins might help stabilize positioning of ribosome-bound tRNAs. The protein is Large ribosomal subunit protein uL5 of Ehrlichia canis (strain Jake).